We begin with the raw amino-acid sequence, 959 residues long: Kinesin-like protein NACK1 (959 aa).

The disordered stretch occupies residues 1 to 28 (MTVRTPGTPASKIDKTPATTPNGHRGRE). The Kinesin motor domain maps to 30 to 353 (KIVVTVRLRP…LYFATRAKEV (324 aa)). ATP is bound at residue 117-124 (GQTSSGKT). Residue T145 is modified to Phosphothreonine. Residues 362 to 429 (VVSDKQLVKH…LRRKLQEEQG (68 aa)) are a coiled coil. Disordered stretches follow at residues 417-438 (VDEL…SVSP), 451-473 (SPNL…GRQS), 598-640 (LPSN…FLKS), and 658-700 (NRAP…SVNM). Basic and acidic residues-rich tracts occupy residues 418–429 (DELRRKLQEEQG) and 454–466 (LEEK…ERTR). Residues 557–598 (KSVSANLKEEIARLHSQGSTIADLEEQLENVQKSLDKLVMSL) are a coiled coil. Residues 600–611 (SNNDQQSNNDTT) show a composition bias toward low complexity. Over residues 613–623 (KAKHPSKKKKL) the composition is skewed to basic residues. The span at 630–640 (NSINRQNFLKS) shows a compositional bias: polar residues. Phosphothreonine is present on residues T675 and T690. The interval 685–756 (SSKEGTPYRR…EANEAAGYNL (72 aa)) is required for the binding to NPK1.

Belongs to the TRAFAC class myosin-kinesin ATPase superfamily. Kinesin family. KIN-7 subfamily. In terms of assembly, interacts (via C-terminus) with NPK1 (via C-terminus). In terms of processing, phosphorylated at Thr-145, Thr-675 and Thr-690 by CDKAs and CDKBs. The phosphorylation occurs before metaphase and inhibits the interaction with NPK1 preventing the transition to cytokinesis.

The protein resides in the cytoplasm. Its subcellular location is the nucleus. It localises to the cytoskeleton. It is found in the phragmoplast. Its function is as follows. Probable plus end-directed motor protein that functions in the NACK-PQR (NPK1-NQK1/MEK1-NRK1) MAP kinase signaling pathway, which is essential for somatic cell cytokinesis, especially for the cell-plate formation and its expansion. Regulates the activity and the localization of NPK1 by association through the non-catalytic region of the kinase. This chain is Kinesin-like protein NACK1 (NACK1), found in Nicotiana tabacum (Common tobacco).